We begin with the raw amino-acid sequence, 573 residues long: Dilute domain-containing protein SPAC25B8.08 (573 aa).

Residues 180-464 form the Dilute domain; the sequence is NAFLCEVNQV…LKKLDAFHEE (285 aa).

It is found in the cytoplasm. The protein resides in the golgi apparatus. This Schizosaccharomyces pombe (strain 972 / ATCC 24843) (Fission yeast) protein is Dilute domain-containing protein SPAC25B8.08.